A 513-amino-acid polypeptide reads, in one-letter code: Protein phosphatase 1H (513 aa).

Serine 7 bears the Phosphoserine mark. In terms of domain architecture, PPM-type phosphatase spans 77–506; that stretch reads ATGYAEVINA…DDISVYVIPL (430 aa). The interval 109-133 is disordered; that stretch reads TITSTPNRNSKRRSSLPNGEGLQLK. Position 113 is a phosphothreonine (threonine 113). Serine 123 and serine 210 each carry phosphoserine. Arginine 212 bears the Omega-N-methylarginine mark. A Phosphoserine modification is found at serine 220. Residue threonine 223 is modified to Phosphothreonine. Serine 421 is subject to Phosphoserine.

It belongs to the PP2C family.

The protein localises to the nucleus. Its subcellular location is the cytoplasm. The catalysed reaction is O-phospho-L-seryl-[protein] + H2O = L-seryl-[protein] + phosphate. It carries out the reaction O-phospho-L-threonyl-[protein] + H2O = L-threonyl-[protein] + phosphate. Dephosphorylates CDKN1B at 'Thr-187', thus removing a signal for proteasomal degradation. The polypeptide is Protein phosphatase 1H (Ppm1h) (Mus musculus (Mouse)).